The primary structure comprises 590 residues: Proline--tRNA ligase (590 aa).

Belongs to the class-II aminoacyl-tRNA synthetase family. ProS type 1 subfamily. As to quaternary structure, homodimer.

It localises to the cytoplasm. The enzyme catalyses tRNA(Pro) + L-proline + ATP = L-prolyl-tRNA(Pro) + AMP + diphosphate. In terms of biological role, catalyzes the attachment of proline to tRNA(Pro) in a two-step reaction: proline is first activated by ATP to form Pro-AMP and then transferred to the acceptor end of tRNA(Pro). As ProRS can inadvertently accommodate and process non-cognate amino acids such as alanine and cysteine, to avoid such errors it has two additional distinct editing activities against alanine. One activity is designated as 'pretransfer' editing and involves the tRNA(Pro)-independent hydrolysis of activated Ala-AMP. The other activity is designated 'posttransfer' editing and involves deacylation of mischarged Ala-tRNA(Pro). The misacylated Cys-tRNA(Pro) is not edited by ProRS. The polypeptide is Proline--tRNA ligase (Clavibacter sepedonicus (Clavibacter michiganensis subsp. sepedonicus)).